A 1085-amino-acid chain; its full sequence is Carbamoyl phosphate synthase large chain (1085 aa).

Residues Met1 to Glu399 form a carboxyphosphate synthetic domain region. Residues Arg127, Arg167, Gly174, Glu206, Leu208, Glu213, Gly239, Val240, His241, Gln283, and Glu297 each contribute to the ATP site. An ATP-grasp 1 domain is found at Lys131–Val326. The Mg(2+) site is built by Gln283, Glu297, and Asn299. Residues Gln283, Glu297, and Asn299 each contribute to the Mn(2+) site. The tract at residues Asn400–Asn552 is oligomerization domain. The tract at residues Lys553 to Phe951 is carbamoyl phosphate synthetic domain. Residues Ser678–Val871 form the ATP-grasp 2 domain. Arg714, Lys756, Leu758, Glu763, Gly788, Ile789, His790, Ser791, Gln830, and Glu842 together coordinate ATP. Gln830, Glu842, and Asn844 together coordinate Mg(2+). Mn(2+) is bound by residues Gln830, Glu842, and Asn844. Residues Asn952–Lys1085 enclose the MGS-like domain. The interval Asn952–Lys1085 is allosteric domain.

This sequence belongs to the CarB family. As to quaternary structure, composed of two chains; the small (or glutamine) chain promotes the hydrolysis of glutamine to ammonia, which is used by the large (or ammonia) chain to synthesize carbamoyl phosphate. Tetramer of heterodimers (alpha,beta)4. It depends on Mg(2+) as a cofactor. The cofactor is Mn(2+).

It catalyses the reaction hydrogencarbonate + L-glutamine + 2 ATP + H2O = carbamoyl phosphate + L-glutamate + 2 ADP + phosphate + 2 H(+). It carries out the reaction hydrogencarbonate + NH4(+) + 2 ATP = carbamoyl phosphate + 2 ADP + phosphate + 2 H(+). Its pathway is amino-acid biosynthesis; L-arginine biosynthesis; carbamoyl phosphate from bicarbonate: step 1/1. The protein operates within pyrimidine metabolism; UMP biosynthesis via de novo pathway; (S)-dihydroorotate from bicarbonate: step 1/3. In terms of biological role, large subunit of the glutamine-dependent carbamoyl phosphate synthetase (CPSase). CPSase catalyzes the formation of carbamoyl phosphate from the ammonia moiety of glutamine, carbonate, and phosphate donated by ATP, constituting the first step of 2 biosynthetic pathways, one leading to arginine and/or urea and the other to pyrimidine nucleotides. The large subunit (synthetase) binds the substrates ammonia (free or transferred from glutamine from the small subunit), hydrogencarbonate and ATP and carries out an ATP-coupled ligase reaction, activating hydrogencarbonate by forming carboxy phosphate which reacts with ammonia to form carbamoyl phosphate. This Helicobacter pylori (strain ATCC 700392 / 26695) (Campylobacter pylori) protein is Carbamoyl phosphate synthase large chain.